Consider the following 406-residue polypeptide: COP9 signalosome complex subunit 4 (406 aa).

Residues 197-366 (YRRKFIEAAQ…GIVHFETREP (170 aa)) enclose the PCI domain.

Belongs to the CSN4 family. Component of the CSN complex, probably composed of cops1, cops2, cops3, cops4, cops5, cops6, cops7, cops8 and cops9.

It is found in the cytoplasm. The protein localises to the nucleus. The protein resides in the cytoplasmic vesicle. Its subcellular location is the secretory vesicle. It localises to the synaptic vesicle. Its function is as follows. Component of the COP9 signalosome complex (CSN), a complex involved in various cellular and developmental processes. The CSN complex is an essential regulator of the ubiquitin (Ubl) conjugation pathway by mediating the deneddylation of the cullin subunits of E3 ligase complexes, leading to modify the Ubl ligase activity. In Danio rerio (Zebrafish), this protein is COP9 signalosome complex subunit 4 (cops4).